The sequence spans 376 residues: Probable sister chromatid cohesion protein DCC1 (376 aa).

The tract at residues Gln213–Asp232 is disordered. Gly residues predominate over residues Ser219 to Asp232.

It belongs to the DCC1 family.

It localises to the nucleus. In terms of biological role, loads PCNA onto primed templates regulating velocity, spacing and restart activity of replication forks. May couple DNA replication to sister chromatid cohesion. The chain is Probable sister chromatid cohesion protein DCC1 from Dictyostelium discoideum (Social amoeba).